The chain runs to 95 residues: MALSSDDVVKIARLARLRVSEAERGAVQGQLNGIFDLIEAMRAVDTAGVEPMAHPQDAALRLRADAVTETDRRSAYQAVAPQVENGLYLVPKVIE.

Belongs to the GatC family. In terms of assembly, heterotrimer of A, B and C subunits.

The catalysed reaction is L-glutamyl-tRNA(Gln) + L-glutamine + ATP + H2O = L-glutaminyl-tRNA(Gln) + L-glutamate + ADP + phosphate + H(+). It carries out the reaction L-aspartyl-tRNA(Asn) + L-glutamine + ATP + H2O = L-asparaginyl-tRNA(Asn) + L-glutamate + ADP + phosphate + 2 H(+). Functionally, allows the formation of correctly charged Asn-tRNA(Asn) or Gln-tRNA(Gln) through the transamidation of misacylated Asp-tRNA(Asn) or Glu-tRNA(Gln) in organisms which lack either or both of asparaginyl-tRNA or glutaminyl-tRNA synthetases. The reaction takes place in the presence of glutamine and ATP through an activated phospho-Asp-tRNA(Asn) or phospho-Glu-tRNA(Gln). The chain is Aspartyl/glutamyl-tRNA(Asn/Gln) amidotransferase subunit C from Laribacter hongkongensis (strain HLHK9).